Consider the following 869-residue polypeptide: Histone deacetylase 4 (869 aa).

Disordered stretches follow at residues 1-25 (MEEASSSTGSAGGAGPSVPNLPSTS), 128-167 (SSSNGNLSVPQTPTKEHHPTAPTSNRKCDLPRSNSTTISQ), and 180-218 (RSKGESNSQSNLMSNSVTANGNGHDNGRKLKNSNSQVNV). Positions 184 to 202 (ESNSQSNLMSNSVTANGNG) are enriched in polar residues. Serine 251 carries the post-translational modification Phosphoserine. Residues 460–802 (CTTGLGYDQA…VQALIGESDD (343 aa)) are histone deacetylase. Histidine 608 is an active-site residue.

This sequence belongs to the histone deacetylase family. HD type 2 subfamily. In terms of assembly, interacts with mef-2. Post-translationally, phosphorylated by serine/threonine-protein kinase kin-29 at Ser-251; the phosphorylation inhibits repression of transcription by mef-2. May be phosphorylated by either cyclic-AMP dependent or cyclic-GMP dependent protein kinases. Expressed in body-wall muscle cells, hypodermal seam cells and neuronal cells including sensory amphid neuronal processes, the nerve ring, ventral nerve cords and motor neuronal commissures.

The protein resides in the nucleus. It carries out the reaction N(6)-acetyl-L-lysyl-[histone] + H2O = L-lysyl-[histone] + acetate. Responsible for the deacetylation of lysine residues on the N-terminal part of the core histones (H2A, H2B, H3 and H4). Histone deacetylation gives a tag for epigenetic repression and plays an important role in transcriptional regulation, cell cycle progression and developmental events. Histone deacetylases act via the formation of large multiprotein complexes. Involved in transduction of sensory signals, together with egl-4, kin-29 and mef-2; binding to transcription factor mef-2 enables negative modulation of chemoreceptor gene expression in chemosensory neurons. May be involved in muscle development. In Caenorhabditis elegans, this protein is Histone deacetylase 4 (hda-4).